Reading from the N-terminus, the 278-residue chain is HTH-type transcriptional activator RhaS (278 aa).

An HTH araC/xylS-type domain is found at 174 to 272 (NQLMAWLEDH…SWSPREIRQG (99 aa)). DNA-binding regions (H-T-H motif) lie at residues 191-212 (ETVADVFSLSLRTLHRQLKQHT) and 239-262 (VTDIAYRCGFGDSNHFSTLFRREF).

Binds DNA as a dimer.

The protein localises to the cytoplasm. Activates expression of the rhaBAD and rhaT operons. This chain is HTH-type transcriptional activator RhaS, found in Enterobacter sp. (strain 638).